We begin with the raw amino-acid sequence, 282 residues long: Bifunctional protein FolD (282 aa).

NADP(+)-binding positions include 164 to 166 (GRS) and Ser-189.

The protein belongs to the tetrahydrofolate dehydrogenase/cyclohydrolase family. Homodimer.

It catalyses the reaction (6R)-5,10-methylene-5,6,7,8-tetrahydrofolate + NADP(+) = (6R)-5,10-methenyltetrahydrofolate + NADPH. It carries out the reaction (6R)-5,10-methenyltetrahydrofolate + H2O = (6R)-10-formyltetrahydrofolate + H(+). The protein operates within one-carbon metabolism; tetrahydrofolate interconversion. In terms of biological role, catalyzes the oxidation of 5,10-methylenetetrahydrofolate to 5,10-methenyltetrahydrofolate and then the hydrolysis of 5,10-methenyltetrahydrofolate to 10-formyltetrahydrofolate. This chain is Bifunctional protein FolD, found in Lachnoclostridium phytofermentans (strain ATCC 700394 / DSM 18823 / ISDg) (Clostridium phytofermentans).